Reading from the N-terminus, the 365-residue chain is Cyclin-D5-2 (365 aa).

This sequence belongs to the cyclin family. Cyclin D subfamily.

The protein is Cyclin-D5-2 (CYCD5-2) of Oryza sativa subsp. japonica (Rice).